Here is a 96-residue protein sequence, read N- to C-terminus: MENLRNGEDNGSLIPFTFFDQSSVTIPLLKCSGLESSSSSSSSCDLSSSHSEEDESIDIKEEEEEEEEDGMTIEIKARGKNKTKPTPSSGKGGKHN.

Residues 1–73 (MENLRNGEDN…EEEEEDGMTI (73 aa)) constitute a propeptide that is removed on maturation. The disordered stretch occupies residues 32–96 (SGLESSSSSS…PSSGKGGKHN (65 aa)). Residues 35–49 (ESSSSSSSSCDLSSS) are compositionally biased toward low complexity. Acidic residues predominate over residues 52–71 (EEDESIDIKEEEEEEEEDGM).

Belongs to the brassicaceae elicitor peptide family.

Functionally, elicitor of plant defense. The protein is Elicitor peptide 3 (PEP3) of Arabidopsis thaliana (Mouse-ear cress).